A 183-amino-acid chain; its full sequence is Copper transporter 4 (183 aa).

The interval 1–21 (MAMPMPMPPPGPGGDAPPAPT) is disordered. Transmembrane regions (helical) follow at residues 56–76 (VGMY…AEAL) and 115–135 (LAYL…LAAV).

This sequence belongs to the copper transporter (Ctr) (TC 1.A.56) family. SLC31A subfamily.

Its subcellular location is the membrane. In terms of biological role, involved in the transport of copper. The sequence is that of Copper transporter 4 (COPT4) from Oryza sativa subsp. japonica (Rice).